Here is a 154-residue protein sequence, read N- to C-terminus: UPF0756 membrane protein EAT1b_0668 (154 aa).

A run of 5 helical transmembrane segments spans residues Leu5–Ala25, Trp52–Phe72, Pro82–Val102, Val107–Lys127, and Ile129–Val149.

This sequence belongs to the UPF0756 family.

The protein resides in the cell membrane. This Exiguobacterium sp. (strain ATCC BAA-1283 / AT1b) protein is UPF0756 membrane protein EAT1b_0668.